A 276-amino-acid chain; its full sequence is Large ribosomal subunit protein uL2 (276 aa).

The tract at residues 223 to 276 is disordered; the sequence is GVAMNPVDHPHGGGEGRGKGHHPTSPWGLPTKGYKTRRGKRPSDKFIVRRRNEV. Basic and acidic residues-rich tracts occupy residues 230-240 and 263-276; these read DHPHGGGEGRG and RPSD…RNEV.

This sequence belongs to the universal ribosomal protein uL2 family. In terms of assembly, part of the 50S ribosomal subunit. Forms a bridge to the 30S subunit in the 70S ribosome.

Its function is as follows. One of the primary rRNA binding proteins. Required for association of the 30S and 50S subunits to form the 70S ribosome, for tRNA binding and peptide bond formation. It has been suggested to have peptidyltransferase activity; this is somewhat controversial. Makes several contacts with the 16S rRNA in the 70S ribosome. This chain is Large ribosomal subunit protein uL2, found in Thermotoga neapolitana (strain ATCC 49049 / DSM 4359 / NBRC 107923 / NS-E).